The primary structure comprises 55 residues: uncharacterized protein (55 aa).

This is an uncharacterized protein from Homo sapiens (Human).